Reading from the N-terminus, the 222-residue chain is Translation initiation factor 6 (222 aa).

The protein belongs to the eIF-6 family.

Binds to the 50S ribosomal subunit and prevents its association with the 30S ribosomal subunit to form the 70S initiation complex. This Methanocorpusculum labreanum (strain ATCC 43576 / DSM 4855 / Z) protein is Translation initiation factor 6.